The chain runs to 338 residues: 1-aminocyclopropane-1-carboxylate deaminase (338 aa).

Lys-51 is subject to N6-(pyridoxal phosphate)lysine. Ser-78 serves as the catalytic Nucleophile.

This sequence belongs to the ACC deaminase/D-cysteine desulfhydrase family. In terms of assembly, homotrimer. The cofactor is pyridoxal 5'-phosphate.

It catalyses the reaction 1-aminocyclopropane-1-carboxylate + H2O = 2-oxobutanoate + NH4(+). In terms of biological role, catalyzes a cyclopropane ring-opening reaction, the irreversible conversion of 1-aminocyclopropane-1-carboxylate (ACC) to ammonia and alpha-ketobutyrate. Allows growth on ACC as a nitrogen source. The polypeptide is 1-aminocyclopropane-1-carboxylate deaminase (Pseudomonas sp. (strain ACP)).